The following is a 1337-amino-acid chain: Sister chromatid cohesion protein PDS5 homolog A (1337 aa).

Methionine 1 is subject to N-acetylmethionine. Residues 393-429 (ALVNDQLLGFVRERTLDKRWRVRKEAMMGLAQLYKKY) form an HEAT repeat. Serine 1097 carries the phosphoserine modification. Lysine 1146 bears the N6-acetyllysine mark. The interval 1150-1337 (ATGRKPYVRS…PAERQIDLQR (188 aa)) is disordered. The span at 1159-1180 (STGTETGSNINVNSELNPSTGN) shows a compositional bias: polar residues. The residue at position 1195 (serine 1195) is a Phosphoserine. Position 1208 is a phosphothreonine (threonine 1208). Lysine 1211 is subject to N6-acetyllysine. The span at 1223 to 1233 (SDQATQGNISS) shows a compositional bias: polar residues. Lysine 1290 is subject to N6-acetyllysine. The residue at position 1305 (serine 1305) is a Phosphoserine. Over residues 1321–1337 (DLAKKAAPAERQIDLQR) the composition is skewed to basic and acidic residues.

The protein belongs to the PDS5 family. In terms of assembly, interacts with the cohesin complex. Interacts with WAPL (via FGF motifs) or CDCA5 (via the FGF motif); the interaction is direct, cohesin-dependent and competitive. Interacts with SMC3. Interacts with TP63. Highest level in colon. Low levels in lung, ovary, breast and kidney. Reduced level in renal tumor tissue. Isoform 2 is expressed in kidney.

It is found in the nucleus. Its function is as follows. Probable regulator of sister chromatid cohesion in mitosis which may stabilize cohesin complex association with chromatin. May couple sister chromatid cohesion during mitosis to DNA replication. Cohesion ensures that chromosome partitioning is accurate in both meiotic and mitotic cells and plays an important role in DNA repair. The protein is Sister chromatid cohesion protein PDS5 homolog A of Homo sapiens (Human).